Reading from the N-terminus, the 150-residue chain is Protein SprT-like (150 aa).

The 142-residue stretch at 6 to 147 folds into the SprT-like domain; sequence LQKLTEDISE…CGKCRGKIKR (142 aa). His67 contributes to the Zn(2+) binding site. Glu68 is an active-site residue. Residue His71 participates in Zn(2+) binding.

The protein belongs to the SprT family. Requires Zn(2+) as cofactor.

It localises to the cytoplasm. The sequence is that of Protein SprT-like (ydcK) from Bacillus subtilis (strain 168).